The sequence spans 125 residues: Fluoride-specific ion channel FluC (125 aa).

4 consecutive transmembrane segments (helical) span residues 6 to 26 (GFIA…SGLV), 34 to 54 (FPWG…LVWE), 68 to 88 (AVLL…IFES), and 98 to 118 (LALL…LFAG). Na(+)-binding residues include Gly76 and Thr79.

It belongs to the fluoride channel Fluc/FEX (TC 1.A.43) family.

The protein resides in the cell inner membrane. The enzyme catalyses fluoride(in) = fluoride(out). Na(+) is not transported, but it plays an essential structural role and its presence is essential for fluoride channel function. Its function is as follows. Fluoride-specific ion channel. Important for reducing fluoride concentration in the cell, thus reducing its toxicity. The chain is Fluoride-specific ion channel FluC from Solidesulfovibrio magneticus (strain ATCC 700980 / DSM 13731 / RS-1) (Desulfovibrio magneticus).